Consider the following 285-residue polypeptide: Energy-coupling factor transporter ATP-binding protein EcfA2 (285 aa).

Residues 3 to 245 (INFEQVNFSY…DLVWFKTVAL (243 aa)) enclose the ABC transporter domain. Residue 40–47 (GQTGSGKS) coordinates ATP. Glu-171 serves as the catalytic Proton acceptor.

Belongs to the ABC transporter superfamily. Energy-coupling factor EcfA family. Forms a stable energy-coupling factor (ECF) transporter complex probably composed of 2 membrane-embedded substrate-binding proteins (S component), 2 ATP-binding proteins (A component) and 2 transmembrane proteins (T component). This complex interacts with a number of substrate-specific components, including FolT, PanT and RibU for 5-formyltetrahydrofolate, pantothenate and riboflavin respectively.

Its subcellular location is the cell membrane. ATP-binding (A) component of a common energy-coupling factor (ECF) ABC-transporter complex. Unlike classic ABC transporters this ECF transporter provides the energy necessary to transport a number of different substrates including 5-formyltetrahydrofolate, pantothenate and riboflavin. Expression of the complex plus FolT in E.coli allows 5-formyltetrahydrofolate uptake; 5-formyltetrahydrofolate is not taken up in the absence of FolT or the EcfA1A2T complex. The polypeptide is Energy-coupling factor transporter ATP-binding protein EcfA2 (Leuconostoc mesenteroides subsp. mesenteroides (strain ATCC 8293 / DSM 20343 / BCRC 11652 / CCM 1803 / JCM 6124 / NCDO 523 / NBRC 100496 / NCIMB 8023 / NCTC 12954 / NRRL B-1118 / 37Y)).